A 268-amino-acid polypeptide reads, in one-letter code: UDP-2,3-diacylglucosamine hydrolase (268 aa).

The Mn(2+) site is built by Asp25, His27, Asp58, Asn97, and His132. 97–98 (NR) provides a ligand contact to substrate. 4 residues coordinate substrate: Asp140, Ser178, Glu191, and His222. Mn(2+)-binding residues include His222 and His224.

The protein belongs to the LpxH family. The cofactor is Mn(2+).

The protein localises to the cell inner membrane. The enzyme catalyses UDP-2-N,3-O-bis[(3R)-3-hydroxytetradecanoyl]-alpha-D-glucosamine + H2O = 2-N,3-O-bis[(3R)-3-hydroxytetradecanoyl]-alpha-D-glucosaminyl 1-phosphate + UMP + 2 H(+). The protein operates within glycolipid biosynthesis; lipid IV(A) biosynthesis; lipid IV(A) from (3R)-3-hydroxytetradecanoyl-[acyl-carrier-protein] and UDP-N-acetyl-alpha-D-glucosamine: step 4/6. Its function is as follows. Hydrolyzes the pyrophosphate bond of UDP-2,3-diacylglucosamine to yield 2,3-diacylglucosamine 1-phosphate (lipid X) and UMP by catalyzing the attack of water at the alpha-P atom. Involved in the biosynthesis of lipid A, a phosphorylated glycolipid that anchors the lipopolysaccharide to the outer membrane of the cell. The chain is UDP-2,3-diacylglucosamine hydrolase from Ralstonia nicotianae (strain ATCC BAA-1114 / GMI1000) (Ralstonia solanacearum).